The primary structure comprises 376 residues: ATP phosphoribosyltransferase regulatory subunit (376 aa).

It belongs to the class-II aminoacyl-tRNA synthetase family. HisZ subfamily. Heteromultimer composed of HisG and HisZ subunits.

The protein localises to the cytoplasm. Its pathway is amino-acid biosynthesis; L-histidine biosynthesis; L-histidine from 5-phospho-alpha-D-ribose 1-diphosphate: step 1/9. Required for the first step of histidine biosynthesis. May allow the feedback regulation of ATP phosphoribosyltransferase activity by histidine. The polypeptide is ATP phosphoribosyltransferase regulatory subunit (Brucella anthropi (strain ATCC 49188 / DSM 6882 / CCUG 24695 / JCM 21032 / LMG 3331 / NBRC 15819 / NCTC 12168 / Alc 37) (Ochrobactrum anthropi)).